A 236-amino-acid chain; its full sequence is 3-deoxy-D-manno-octulosonic acid kinase (236 aa).

Residue Asp-166 is part of the active site.

It belongs to the protein kinase superfamily. KdkA/RfaP family.

The protein resides in the cell inner membrane. It carries out the reaction an alpha-Kdo-(2-&gt;6)-lipid IVA + ATP = a 4-O-phospho-alpha-Kdo-(2-&gt;6)-lipid IVA + ADP + H(+). The protein operates within bacterial outer membrane biogenesis; LPS core biosynthesis. Functionally, catalyzes the ATP-dependent phosphorylation of the 3-deoxy-D-manno-octulosonic acid (Kdo) residue in Kdo-lipid IV(A) at the 4-OH position. In Photobacterium profundum (strain SS9), this protein is 3-deoxy-D-manno-octulosonic acid kinase.